The chain runs to 151 residues: D-aminoacyl-tRNA deacylase (151 aa).

Residues 137-138 carry the Gly-cisPro motif, important for rejection of L-amino acids motif; it reads GP.

It belongs to the DTD family. Homodimer.

It localises to the cytoplasm. It carries out the reaction glycyl-tRNA(Ala) + H2O = tRNA(Ala) + glycine + H(+). It catalyses the reaction a D-aminoacyl-tRNA + H2O = a tRNA + a D-alpha-amino acid + H(+). An aminoacyl-tRNA editing enzyme that deacylates mischarged D-aminoacyl-tRNAs. Also deacylates mischarged glycyl-tRNA(Ala), protecting cells against glycine mischarging by AlaRS. Acts via tRNA-based rather than protein-based catalysis; rejects L-amino acids rather than detecting D-amino acids in the active site. By recycling D-aminoacyl-tRNA to D-amino acids and free tRNA molecules, this enzyme counteracts the toxicity associated with the formation of D-aminoacyl-tRNA entities in vivo and helps enforce protein L-homochirality. This is D-aminoacyl-tRNA deacylase from Geobacter metallireducens (strain ATCC 53774 / DSM 7210 / GS-15).